The following is a 244-amino-acid chain: Protein IN2-1 homolog B (244 aa).

Residues 1–27 form a disordered region; that stretch reads MAAAAAAPASSEKEVLPPSLTSSSEPP. Positions 32–113 constitute a GST N-terminal domain; that stretch reads GTTRLYVAYH…YIDTNFEGPA (82 aa). Glutathione contacts are provided by residues valine 85 and 97 to 98; that span reads ES. One can recognise a GST C-terminal domain in the interval 118-241; sequence DSEKQQFAEE…FLLEHTKKRL (124 aa).

This chain is Protein IN2-1 homolog B (GSTZ5), found in Oryza sativa subsp. indica (Rice).